The following is a 606-amino-acid chain: NADH-ubiquinone oxidoreductase chain 5 (606 aa).

15 helical membrane passes run 1–21 (MNMFSSCMITALVILTLPIIM), 43–63 (AFMISMIPTMMFIYSGQETIF), 87–107 (MIFVPVALFVTWSIMEFSMWY), 117–137 (FFKYLLLFLITMMVLVTANNM), 140–160 (LFIGWEGVGIMSFLLIGWWYG), 171–191 (AVLYNRIGDVGFIMTMAWFLL), 201–221 (IFITTNDNFNLPLLGLLLAAT), 241–261 (TPVSALLHSSTMVVAGVFLLI), 273–293 (IQTLTLCLGAITTLFTAICAL), 310–330 (LGLMMVTIGINQPYLAFLHIC), 365–385 (VLPFTTTSLIIGSLALTGMPF), 409–429 (LLITLVATSLTAAYSTRIMFF), 457–477 (LLIGSVFAGYIISHSITPTTI), 488–508 (MTALAVTILGFILALELNLTT), and 582–602 (GLIKLYFLSFMLTMILSLLIL).

Belongs to the complex I subunit 5 family. As to quaternary structure, core subunit of respiratory chain NADH dehydrogenase (Complex I) which is composed of 45 different subunits.

It localises to the mitochondrion inner membrane. It catalyses the reaction a ubiquinone + NADH + 5 H(+)(in) = a ubiquinol + NAD(+) + 4 H(+)(out). Its function is as follows. Core subunit of the mitochondrial membrane respiratory chain NADH dehydrogenase (Complex I) which catalyzes electron transfer from NADH through the respiratory chain, using ubiquinone as an electron acceptor. Essential for the catalytic activity and assembly of complex I. This is NADH-ubiquinone oxidoreductase chain 5 (MT-ND5) from Canis lupus familiaris (Dog).